The primary structure comprises 461 residues: GTPase Der (461 aa).

EngA-type G domains are found at residues 9–171 and 200–371; these read KTIA…NLNK and IQVG…ECFS. GTP is bound by residues 15–22, 62–66, 123–126, 206–213, 253–257, and 317–320; these read GQPNVGKS, DTGGM, NKID, GRVNVGKS, DTAGI, and NKWD. One can recognise a KH-like domain in the interval 372–456; it reads KRIPTSLLNS…PLILNAKDKK (85 aa).

The protein belongs to the TRAFAC class TrmE-Era-EngA-EngB-Septin-like GTPase superfamily. EngA (Der) GTPase family. As to quaternary structure, associates with the 50S ribosomal subunit.

In terms of biological role, GTPase that plays an essential role in the late steps of ribosome biogenesis. This is GTPase Der from Helicobacter pylori (strain HPAG1).